The following is a 265-amino-acid chain: MAINLQTLFKKKREGKKITMVSTYDYWSAKLCDEVGIDCILVGDSLGTVVKGEGDTLSVTLEEIIYHTKCVMRGVKNAFVIADMPFMSYQVSMEKAVENCGRVIKETKAKAVKLEGGEEIAELVYKLTRIGIPVVGHVGFTPQHINVFGKPKVVGKKKEEEEKLRRDFRALEEAGAFMIVLESVPTHLAKELWKGSNSIVIGIGAGKYVDGQVLVFHDIVGLFEDFKPKFVRRYLEGAKLVKEALKNFKIDVEGGNFPSEEESYG.

2 residues coordinate Mg(2+): Asp44 and Asp83. 3-methyl-2-oxobutanoate contacts are provided by residues 44-45, Asp83, and Lys113; that span reads DS. Residue Glu115 coordinates Mg(2+). Glu182 acts as the Proton acceptor in catalysis.

Belongs to the PanB family. As to quaternary structure, homodecamer; pentamer of dimers. Mg(2+) serves as cofactor.

Its subcellular location is the cytoplasm. The enzyme catalyses 3-methyl-2-oxobutanoate + (6R)-5,10-methylene-5,6,7,8-tetrahydrofolate + H2O = 2-dehydropantoate + (6S)-5,6,7,8-tetrahydrofolate. The protein operates within cofactor biosynthesis; (R)-pantothenate biosynthesis; (R)-pantoate from 3-methyl-2-oxobutanoate: step 1/2. Catalyzes the reversible reaction in which hydroxymethyl group from 5,10-methylenetetrahydrofolate is transferred onto alpha-ketoisovalerate to form ketopantoate. The polypeptide is 3-methyl-2-oxobutanoate hydroxymethyltransferase (Aquifex aeolicus (strain VF5)).